Reading from the N-terminus, the 198-residue chain is FMN-dependent NADH:quinone oxidoreductase (198 aa).

Ser-10 provides a ligand contact to FMN.

It belongs to the azoreductase type 1 family. In terms of assembly, homodimer. Requires FMN as cofactor.

The enzyme catalyses 2 a quinone + NADH + H(+) = 2 a 1,4-benzosemiquinone + NAD(+). It carries out the reaction N,N-dimethyl-1,4-phenylenediamine + anthranilate + 2 NAD(+) = 2-(4-dimethylaminophenyl)diazenylbenzoate + 2 NADH + 2 H(+). Its function is as follows. Quinone reductase that provides resistance to thiol-specific stress caused by electrophilic quinones. In terms of biological role, also exhibits azoreductase activity. Catalyzes the reductive cleavage of the azo bond in aromatic azo compounds to the corresponding amines. The protein is FMN-dependent NADH:quinone oxidoreductase of Paraburkholderia phymatum (strain DSM 17167 / CIP 108236 / LMG 21445 / STM815) (Burkholderia phymatum).